We begin with the raw amino-acid sequence, 679 residues long: Methionine--tRNA ligase (679 aa).

The short motif at 14–24 (PYANGSIHLGH) is the 'HIGH' region element. Zn(2+) is bound by residues Cys145, Cys148, Cys158, and Cys161. Positions 331 to 335 (KMSKS) match the 'KMSKS' region motif. Lys334 provides a ligand contact to ATP. The tRNA-binding domain maps to 577 to 679 (TFAAVDLRVA…SGAKPGQRIK (103 aa)).

The protein belongs to the class-I aminoacyl-tRNA synthetase family. MetG type 1 subfamily. In terms of assembly, homodimer. Zn(2+) is required as a cofactor.

It is found in the cytoplasm. It catalyses the reaction tRNA(Met) + L-methionine + ATP = L-methionyl-tRNA(Met) + AMP + diphosphate. In terms of biological role, is required not only for elongation of protein synthesis but also for the initiation of all mRNA translation through initiator tRNA(fMet) aminoacylation. The chain is Methionine--tRNA ligase from Pseudomonas entomophila (strain L48).